A 311-amino-acid polypeptide reads, in one-letter code: Probable mitochondrial phosphate carrier protein (311 aa).

Over 1–23 (MSTPLIPPAPPKKTLQLYTPQYY) the chain is Mitochondrial intermembrane. 3 Solcar repeats span residues 21–105 (QYYG…FKHK), 118–203 (YRTS…IVEA), and 219–303 (EKIG…FKIM). A helical transmembrane segment spans residues 24–44 (GLCTLGGLLACGTTHSAITPL). Residues 45-67 (DLIKCRKQVNPNIYPGNIAGFKT) are Mitochondrial matrix-facing. The chain crosses the membrane as a helical span at residues 68-88 (ILSKEGLRGLYTGGMPTLIGY). Topologically, residues 89-120 (SLQGCGKYGFYELFKHKYSTLVGAQKAHEYRT) are mitochondrial intermembrane. The helical transmembrane segment at 121–141 (SIYLAASASAELLADIMLCPM) threads the bilayer. The Mitochondrial matrix segment spans residues 142-171 (EAIKVRVQTSNPRFANTTREAWSKIVTNEG). The chain crosses the membrane as a helical span at residues 172-192 (FGTLYRGLAPLWFRQIPYTMM). The Mitochondrial intermembrane segment spans residues 193–220 (KFASFERIVEALYTYIGKPKNMYSKAEK). A helical transmembrane segment spans residues 221–241 (IGISFAGGYMAGVLCAIISHP). Residues 242–269 (ADVMVSKLNSNKKAGEGAGAAAARIYKE) lie on the Mitochondrial matrix side of the membrane. A helical transmembrane segment spans residues 270-290 (IGFSGLWNGLGVRIVMIGTLT). Residues 291–311 (GAQWLIYDSFKIMCGFPATGA) are Mitochondrial intermembrane-facing.

It belongs to the mitochondrial carrier (TC 2.A.29) family.

The protein resides in the mitochondrion inner membrane. Transport of phosphate groups from the cytosol to the mitochondrial matrix. The sequence is that of Probable mitochondrial phosphate carrier protein from Schizosaccharomyces pombe (strain 972 / ATCC 24843) (Fission yeast).